The primary structure comprises 555 residues: Urocanate hydratase (555 aa).

NAD(+)-binding positions include 52-53 (GG), Q130, 176-178 (GMG), E196, R201, 242-243 (NA), 263-267 (QTSAH), 273-274 (YL), and Y322. C410 is a catalytic residue. G492 is an NAD(+) binding site.

This sequence belongs to the urocanase family. NAD(+) is required as a cofactor.

The protein localises to the cytoplasm. The enzyme catalyses 4-imidazolone-5-propanoate = trans-urocanate + H2O. Its pathway is amino-acid degradation; L-histidine degradation into L-glutamate; N-formimidoyl-L-glutamate from L-histidine: step 2/3. In terms of biological role, catalyzes the conversion of urocanate to 4-imidazolone-5-propionate. This is Urocanate hydratase from Shewanella baltica (strain OS195).